A 29-amino-acid polypeptide reads, in one-letter code: Cycloviolacin-O15 (29 aa).

The segment at residues 1-29 is a cross-link (cyclopeptide (Gly-Asn)); sequence GLVPCGETCFTGKCYTPGCSCSYPICKKN. Disulfide bonds link C5/C19, C9/C21, and C14/C26.

This is a cyclic peptide.

Its function is as follows. Probably participates in a plant defense mechanism. Has hemolytic activity. The polypeptide is Cycloviolacin-O15 (Viola odorata (Sweet violet)).